A 413-amino-acid chain; its full sequence is Exodeoxyribonuclease I (413 aa).

The 182-residue stretch at 12 to 193 folds into the Exonuclease domain; that stretch reads LFYDYETFGI…VSDVYATIEI (182 aa). D15, E17, and D186 together coordinate Mg(2+). E17 lines the substrate pocket. One can recognise an ExoI SH3-like domain in the interval 202 to 349; sequence PRLFDFFFKI…QNIKIIFSKN (148 aa). An ExoI C-terminal domain is found at 350–413; it reads NNTNQFFNVD…RYRARNFFIH (64 aa).

Monomer. Interacts with ssb (via C-terminus); this interaction stimulates the exonuclease activity by recruiting the enzyme to its substrate. The cofactor is Mg(2+).

The enzyme catalyses Exonucleolytic cleavage in the 3'- to 5'-direction to yield nucleoside 5'-phosphates.. Degrades single-stranded DNA (ssDNA) in a highly processive manner. Also functions as a DNA deoxyribophosphodiesterase that releases deoxyribose-phosphate moieties following the cleavage of DNA at an apurinic/apyrimidinic (AP) site by either an AP endonuclease or AP lyase. In Buchnera aphidicola subsp. Acyrthosiphon pisum (strain APS) (Acyrthosiphon pisum symbiotic bacterium), this protein is Exodeoxyribonuclease I (sbcB).